The primary structure comprises 576 residues: Insulin-like growth factor 2 mRNA-binding protein 1 (576 aa).

RRM domains follow at residues 2-75 (NKLY…HSVP) and 81-156 (RKIQ…YIPD). The tract at residues 158-189 (QSVQGPENGRRGGFGARGAPRQGSPVTAGAPV) is disordered. KH domains are found at residues 195-260 (DIPL…CKMI) and 276-343 (EVPL…EQEI). The residue at position 396 (Tyr396) is a Phosphotyrosine; by SRC. 2 KH domains span residues 404–469 (QETV…QGRI) and 486–552 (KLET…QRKI).

Belongs to the RRM IMP/VICKZ family. As to quaternary structure, can form homooligomers and heterooligomers with IGF2BP1 and IGF2BP3 in an RNA-dependent manner. Associates with the cytoskeleton, predominantly with actin filament bundles and occasionally with microtubules. In a heterologous system, interacts with ELAVL1, DHX9 and HNRNPU. Post-translationally, phosphorylated by SRC at Tyr-396. This residue is involved in ACTB mRNA binding, its phosphorylation impairs association with ACTB mRNA and hence abolishes translational repression. Phosphorylation occurs in close proximity to filopodia and in the growth cones of differentiated neuroglioblastoma cells. Expressed in neurons and embryonic fibroblasts (at protein level).

It localises to the nucleus. Its subcellular location is the cytoplasm. The protein resides in the perinuclear region. It is found in the P-body. The protein localises to the stress granule. It localises to the cell projection. Its subcellular location is the growth cone. The protein resides in the filopodium. It is found in the lamellipodium. Its function is as follows. RNA-binding factor that recruits target transcripts to cytoplasmic protein-RNA complexes (mRNPs). This transcript 'caging' into mRNPs allows mRNA transport and transient storage. It also modulates the rate and location at which target transcripts encounter the translational apparatus and shields them from endonuclease attacks or microRNA-mediated degradation. Preferentially binds to N6-methyladenosine (m6A)-containing mRNAs and increases their stability. Plays a direct role in the transport and translation of transcripts required for axonal regeneration in adult sensory neurons. Regulates localized beta-actin/ACTB mRNA translation in polarized cells, a crucial process for cell migration and neurite outgrowth. Co-transcriptionally associates with the ACTB mRNA in the nucleus. This binding involves by a conserved 54-nucleotide element in the ACTB mRNA 3'-UTR, known as the 'zipcode'. The ribonucleoparticle (RNP) thus formed is exported to the cytoplasm, binds to a motor protein and is transported along the cytoskeleton to the cell periphery. During transport, IGF2BP1 prevents beta-actin mRNA from being translated into protein. When the RNP complex reaches its destination near the plasma membrane, IGF2BP1 is phosphorylated by SRC. This releases the mRNA, allowing ribosomal 40S and 60S subunits to assemble and initiate ACTB protein synthesis. The monomeric ACTB protein then assembles into the subcortical actin cytoskeleton, which pushes the leading edge onwards. Binds MYC mRNA. Binding to MYC mRNA is enhanced by m6A-modification of the CRD. Promotes the directed movement of cells by fine-tuning intracellular signaling networks. Binds to MAPK4 3'-UTR and inhibits its translation. Interacts with PTEN transcript open reading frame (ORF) and prevents mRNA decay. This combined action on MAPK4 (down-regulation) and PTEN (up-regulation) antagonizes HSPB1 phosphorylation, consequently it prevents G-actin sequestration by phosphorylated HSPB1, allowing F-actin polymerization. Hence enhances the velocity of cell migration and stimulates directed cell migration by PTEN-modulated polarization. The chain is Insulin-like growth factor 2 mRNA-binding protein 1 (IGF2BP1) from Gallus gallus (Chicken).